The sequence spans 78 residues: U-scoloptoxin(13)-Er1a (78 aa).

A signal peptide spans 1 to 24 (MFPSWSTTFVLCMGLCSLMNGALA).

This sequence belongs to the scoloptoxin-13 family. Contains 4 disulfide bonds. In terms of tissue distribution, expressed by the venom gland.

The protein resides in the secreted. The protein is U-scoloptoxin(13)-Er1a of Ethmostigmus rubripes (Giant centipede).